A 327-amino-acid polypeptide reads, in one-letter code: Mycothiol acetyltransferase (327 aa).

N-acetyltransferase domains are found at residues 11 to 159 (EPHG…VTLP) and 162 to 327 (VQIR…EGTS). A 1D-myo-inositol 2-(L-cysteinylamino)-2-deoxy-alpha-D-glucopyranoside-binding site is contributed by glutamate 42. 89–91 (LVI) contacts acetyl-CoA. 1D-myo-inositol 2-(L-cysteinylamino)-2-deoxy-alpha-D-glucopyranoside-binding residues include glutamate 189, lysine 228, and glutamate 251. Residues 255 to 257 (LGV) and 262 to 268 (QGLGLGR) contribute to the acetyl-CoA site. Tyrosine 289 provides a ligand contact to 1D-myo-inositol 2-(L-cysteinylamino)-2-deoxy-alpha-D-glucopyranoside. Acetyl-CoA is bound at residue 294-299 (NAPAIR).

Belongs to the acetyltransferase family. MshD subfamily. Monomer.

The catalysed reaction is 1D-myo-inositol 2-(L-cysteinylamino)-2-deoxy-alpha-D-glucopyranoside + acetyl-CoA = mycothiol + CoA + H(+). In terms of biological role, catalyzes the transfer of acetyl from acetyl-CoA to desacetylmycothiol (Cys-GlcN-Ins) to form mycothiol. The chain is Mycothiol acetyltransferase from Acidothermus cellulolyticus (strain ATCC 43068 / DSM 8971 / 11B).